Consider the following 640-residue polypeptide: Threonine--tRNA ligase (640 aa).

Residues 1–61 form the TGS domain; it reads MPIITLPNGD…TEDSTLQIIT (61 aa). The segment at 242 to 533 is catalytic; it reads DHRKIGKALD…LIEHYAGFMP (292 aa). Zn(2+) contacts are provided by Cys333, His384, and His510.

Belongs to the class-II aminoacyl-tRNA synthetase family. In terms of assembly, homodimer. The cofactor is Zn(2+).

The protein localises to the cytoplasm. It catalyses the reaction tRNA(Thr) + L-threonine + ATP = L-threonyl-tRNA(Thr) + AMP + diphosphate + H(+). In terms of biological role, catalyzes the attachment of threonine to tRNA(Thr) in a two-step reaction: L-threonine is first activated by ATP to form Thr-AMP and then transferred to the acceptor end of tRNA(Thr). Also edits incorrectly charged L-seryl-tRNA(Thr). This chain is Threonine--tRNA ligase, found in Acinetobacter baumannii (strain SDF).